Here is a 62-residue protein sequence, read N- to C-terminus: Overexpressed in colon carcinoma 1 protein homolog (62 aa).

Gly residues predominate over residues 1 to 16; the sequence is MGCGNSTAGGAGGRGA. Positions 1–62 are disordered; that stretch reads MGCGNSTAGG…SGQTKAAPKD (62 aa).

This sequence belongs to the OCC1 family.

This chain is Overexpressed in colon carcinoma 1 protein homolog, found in Gallus gallus (Chicken).